The chain runs to 571 residues: DM7 family protein CG15332 (571 aa).

Residues 440–472 form a disordered region; sequence TRDDGINTADYQSQFPELEPEPEPEPEDEGEDV. A compositionally biased stretch (acidic residues) spans 457–471; sequence LEPEPEPEPEDEGED.

It belongs to the DM7 family.

In Drosophila melanogaster (Fruit fly), this protein is DM7 family protein CG15332.